The chain runs to 627 residues: (+)-sabinene synthase, chloroplastic (627 aa).

The transit peptide at 1 to 46 (MSVISIVPLASNSCLYKSLMSSTHELKALCRPIATLGMCRRGKSVM) directs the protein to the chloroplast. The Mg(2+) site is built by aspartate 378, aspartate 382, and aspartate 530. Positions 378–382 (DDIYD) match the DDXXD motif motif.

Belongs to the terpene synthase family. Tpsd subfamily. Monomer. It depends on Mg(2+) as a cofactor.

The protein resides in the plastid. The protein localises to the chloroplast. It carries out the reaction (2E)-geranyl diphosphate = (1R,5R)-sabinene + diphosphate. It participates in terpene metabolism; oleoresin biosynthesis. Its function is as follows. Terpene synthase (TPS) involved in defensive oleoresin formation in conifers in response to insect attack (e.g. white pine weevil P.strobi) or other injury. Produces (+)-sabinene from geranyl diphosphate, but has no activity with geranylgeranyl diphosphate or farnesyl diphosphate. The sequence is that of (+)-sabinene synthase, chloroplastic (TPS-sab) from Picea sitchensis (Sitka spruce).